The sequence spans 168 residues: G/U mismatch-specific DNA glycosylase (168 aa).

Belongs to the uracil-DNA glycosylase (UDG) superfamily. TDG/mug family. In terms of assembly, binds DNA as a monomer.

Its subcellular location is the cytoplasm. It carries out the reaction Specifically hydrolyzes mismatched double-stranded DNA and polynucleotides, releasing free uracil.. Functionally, excises ethenocytosine and uracil, which can arise by alkylation or deamination of cytosine, respectively, from the corresponding mispairs with guanine in ds-DNA. It is capable of hydrolyzing the carbon-nitrogen bond between the sugar-phosphate backbone of the DNA and the mispaired base. The complementary strand guanine functions in substrate recognition. Required for DNA damage lesion repair in stationary-phase cells. The polypeptide is G/U mismatch-specific DNA glycosylase (Salmonella paratyphi B (strain ATCC BAA-1250 / SPB7)).